The following is a 178-amino-acid chain: Cytochrome b6-f complex iron-sulfur subunit (178 aa).

A helical membrane pass occupies residues 20 to 42; it reads LLTFGTATGVALGALYPVANYFM. A Rieske domain is found at 65–161; it reads KTGWLATHQA…VDIEDDAVLV (97 aa). [2Fe-2S] cluster contacts are provided by C107, H109, C125, and H128. An intrachain disulfide couples C112 to C127.

It belongs to the Rieske iron-sulfur protein family. As to quaternary structure, the 4 large subunits of the cytochrome b6-f complex are cytochrome b6, subunit IV (17 kDa polypeptide, PetD), cytochrome f and the Rieske protein, while the 4 small subunits are PetG, PetL, PetM and PetN. The complex functions as a dimer. The cofactor is [2Fe-2S] cluster.

The protein localises to the cellular thylakoid membrane. It catalyses the reaction 2 oxidized [plastocyanin] + a plastoquinol + 2 H(+)(in) = 2 reduced [plastocyanin] + a plastoquinone + 4 H(+)(out). Its function is as follows. Component of the cytochrome b6-f complex, which mediates electron transfer between photosystem II (PSII) and photosystem I (PSI), cyclic electron flow around PSI, and state transitions. In Prochlorococcus marinus (strain MIT 9301), this protein is Cytochrome b6-f complex iron-sulfur subunit.